Here is a 188-residue protein sequence, read N- to C-terminus: UPF0461 protein C5orf24 homolog (188 aa).

Serine 37 carries the phosphoserine modification. Lysine 75 is covalently cross-linked (Glycyl lysine isopeptide (Lys-Gly) (interchain with G-Cter in SUMO2)). The span at lysine 80 to arginine 92 shows a compositional bias: basic residues. A disordered region spans residues lysine 80 to proline 141. Residues serine 94–glycine 107 are compositionally biased toward polar residues. Phosphoserine occurs at positions 121 and 180. Lysine 184 is covalently cross-linked (Glycyl lysine isopeptide (Lys-Gly) (interchain with G-Cter in SUMO2)).

The protein belongs to the UPF0461 family.

This is UPF0461 protein C5orf24 homolog from Mus musculus (Mouse).